Reading from the N-terminus, the 507-residue chain is Transposase for insertion sequences IS1326/IS1353 (507 aa).

The HTH IS21-type domain maps to 6–68 (ILSAIRRWHF…PFEPKLRQWL (63 aa)). Positions 19–40 (ASIREIARRSGLSRNTVRKYLQ) form a DNA-binding region, H-T-H motif. The Integrase catalytic domain occupies 122-302 (GCFIPLRFAC…TVQEAFADEQ (181 aa)).

Belongs to the transposase IS21/IS408/IS1162 family.

In terms of biological role, required for the transposition of the insertion element. The polypeptide is Transposase for insertion sequences IS1326/IS1353 (istA) (Pseudomonas aeruginosa).